Reading from the N-terminus, the 488-residue chain is Transmembrane protein 39A-B (488 aa).

N-linked (GlcNAc...) asparagine glycosylation is found at asparagine 31 and asparagine 39. Helical transmembrane passes span 72-92 (GLVF…TQYI), 110-130 (TSLN…VMLA), and 155-175 (LIIG…WTTV). N-linked (GlcNAc...) asparagine glycosylation is present at asparagine 180. Residues 182–202 (SVLNLLFLGYPFGVYVPLCCF) traverse the membrane as a helical segment. Asparagine 206 carries N-linked (GlcNAc...) asparagine glycosylation. 4 helical membrane-spanning segments follow: residues 287-307 (EVLF…LCFV), 319-339 (CEHL…QLLP), 420-440 (LLNL…YSLL), and 446-466 (NHTL…FKLL).

This sequence belongs to the TMEM39 family.

Its subcellular location is the membrane. This is Transmembrane protein 39A-B (tmem39a-b) from Xenopus laevis (African clawed frog).